Reading from the N-terminus, the 107-residue chain is Glutaredoxin 4 (107 aa).

The 103-residue stretch at 4–106 folds into the Glutaredoxin domain; sequence LDKIKKQISE…TLLAEVAAKH (103 aa). K21 is a glutathione binding site. Position 29 (C29) interacts with [2Fe-2S] cluster. Residues R58, F70, and 83–84 each bind glutathione; that span reads CD.

It belongs to the glutaredoxin family. Monothiol subfamily. In terms of assembly, homodimer.

The protein resides in the cytoplasm. Functionally, monothiol glutaredoxin involved in the biogenesis of iron-sulfur clusters. This is Glutaredoxin 4 (grxD) from Haemophilus influenzae (strain 86-028NP).